Here is a 642-residue protein sequence, read N- to C-terminus: Voltage-gated potassium channel KCNC2 (642 aa).

Topologically, residues 1–233 are cytoplasmic; it reads MGKIESNERV…EDPYSSRAAR (233 aa). The interval 45 to 98 is disordered; sequence DCLTAAGDKLQPLPPPLSPPPRPPPLSPVPSGCFEGGAGNCSSHGGNGGNGGSD. Positions 56–72 are enriched in pro residues; it reads PLPPPLSPPPRPPPLSP. Residues 78-98 show a composition bias toward gly residues; it reads FEGGAGNCSSHGGNGGNGGSD. Residues His-128, Cys-134, Cys-155, and Cys-156 each contribute to the Zn(2+) site. Residues 234–254 traverse the membrane as a helical segment; that stretch reads FIAFASLFFILVSITTFCLET. N-linked (GlcNAc...) asparagine glycosylation is found at Asn-263 and Asn-270. Residues 287-307 traverse the membrane as a helical segment; it reads TYVEGVCVVWFTFEFLVRIVF. Topologically, residues 308–317 are cytoplasmic; it reads SPNKLEFIKN. Residues 318–338 traverse the membrane as a helical segment; it reads LLNIIDFVAILPFYLEVGLSG. Residues 350–372 form a helical; Voltage-sensor membrane-spanning segment; it reads FLRVVRFVRILRIFKLTRHFVGL. Residues 373 to 385 lie on the Cytoplasmic side of the membrane; the sequence is RVLGHTLRASTNE. A helical membrane pass occupies residues 386-406; that stretch reads FLLLIIFLALGVLIFATMIYY. 4 residues coordinate K(+): Thr-441, Leu-442, Gly-443, and Tyr-444. A Selectivity filter motif is present at residues 441–446; that stretch reads TLGYGD. Residues 457 to 477 form a helical membrane-spanning segment; the sequence is VGALCALAGVLTIAMPVPVIV. The Cytoplasmic segment spans residues 478-642; the sequence is NNFGMYYSLA…RSRSPIPSIL (165 aa). Residues 542–576 are disordered; sequence SVLSGDDSTGSEPPLSPPERLPIRRSSTRDKNRRG. Ser-604 is subject to Phosphoserine.

The protein belongs to the potassium channel family. C (Shaw) (TC 1.A.1.2) subfamily. Kv3.2/KCNC2 sub-subfamily. As to quaternary structure, homotetramer and heterotetramer with other channel-forming alpha subunits, such as KCNC1. Interacts with KCNC1. Homotetramer or heterotetramer channel activity is regulated by association with modulating ancillary subunits such as KCNE1, KCNE2 and KCNE3, creating a functionally diverse range of channel complexes. Interacts with KCNE1, KCNE2 and KCNE3. Phosphorylated by PKA in cortical synaptosomes. cAMP-dependent phosphorylation inhibits channel activity. Histamine H2 receptor- and PKA-induced phosphorylation extends action potential spike duration, reduces action potential spike amplitude, sustains maximum firing frequency in hippocampal interneurons; also reduces the incidence of high-frequency oscillations in hippocampal CA3 pyramidal cell layers. Weakly expressed in the brain at postnatal age day 7 (P7) and increased at P60. Not detectable in newborn hippocampus. Expressed weakly at P7 in the early developing hippocampus, increasing progressively and reaching a plateau of expression at P14 that is maintained throughout P51. Expressed in paravalbumin- and somatostain-containing inhibitory interneurons of the hippocampus; in the CA1/CA3 stratum oriens-alveus and stratum pyramidale and in cells within the hilus and subgranular layer of the dentate gyrus (DG). Strongly expressed in parvalbumin (PV)-containing fast-spiking GABAergic inhibitor interneurons in deep cortical layers V and VI. Also expressed in non-fast-spiking calbindin (CB)- and/or somatostatin (SOM)-containing interneurons in deep cortical layers V and VI. Expressed in starburst amacrine cells of the retina in the inner nuclear layer (INL) and ganglion cell layer (GCL). Expressed in the suprachiasmatic nucleus (SCN) (at protein level). Expressed in the early developing brain, increasing progressively until P14.

It localises to the cell membrane. It is found in the membrane. Its subcellular location is the perikaryon. The protein resides in the cell projection. The protein localises to the axon. It localises to the dendrite. It is found in the postsynaptic cell membrane. Its subcellular location is the presynaptic cell membrane. The protein resides in the synapse. The protein localises to the synaptosome. It localises to the apical cell membrane. It is found in the basolateral cell membrane. It catalyses the reaction K(+)(in) = K(+)(out). With respect to regulation, inhibited by millimolar levels of tetraethylammonium (TEA). Contrary to other channels, inhibited only by millimolar levels of 4-aminopyridine (4-AP). Inhibited by Stichodactyla helianthus peptide ShK. Voltage-gated potassium channel that mediates transmembrane potassium transport in excitable membranes, primarily in the brain. Contributes to the regulation of the fast action potential repolarization and in sustained high-frequency firing in neurons of the central nervous system. Homotetramer channels mediate delayed-rectifier voltage-dependent potassium currents that activate rapidly at high-threshold voltages and inactivate slowly. Forms tetrameric channels through which potassium ions pass in accordance with their electrochemical gradient. The channel alternates between opened and closed conformations in response to the voltage difference across the membrane. Can form functional homotetrameric and heterotetrameric channels that contain variable proportions of KCNC1, and possibly other family members as well; channel properties depend on the type of alpha subunits that are part of the channel. Channel properties may be modulated by either the association with ancillary subunits, such as KCNE1, KCNE2 and KCNE3 or indirectly by nitric oxide (NO) through a cGMP- and PKG-mediated signaling cascade, slowing channel activation and deactivation of delayed rectifier potassium channels. Contributes to fire sustained trains of very brief action potentials at high frequency in thalamocortical and suprachiasmatic nucleus (SCN) neurons, in hippocampal and neocortical interneurons and in retinal ganglion cells. Sustained maximal action potential firing frequency in inhibitory hippocampal interneurons is negatively modulated by histamine H2 receptor activation in a cAMP- and protein kinase (PKA) phosphorylation-dependent manner. Plays a role in maintaining the fidelity of synaptic transmission in neocortical GABAergic interneurons by generating action potential (AP) repolarization at nerve terminals, thus reducing spike-evoked calcium influx and GABA neurotransmitter release. Required for long-range synchronization of gamma oscillations over distance in the neocortex. Contributes to the modulation of the circadian rhythm of spontaneous action potential firing in suprachiasmatic nucleus (SCN) neurons in a light-dependent manner. In Mus musculus (Mouse), this protein is Voltage-gated potassium channel KCNC2.